A 483-amino-acid chain; its full sequence is MSNLTPREIVSELDKYIVGQNAAKRMVAVAMRNRWRRQQLDPALRDEIAPKNIIMMGPTGVGKTEIARRLAKLSASPFIKVEATKFTEVGYVGRDVESMVRDLMEIGIALVRAEENEKVRVKAEARAEERLLDLLLPGGAPQPAPAQGMGGLTFDLSASHSGGQAIPQPPAQADASQASPPTGTGSAPDSRSSTREKLRTLWHGGKLDDREVDMEVEESGGPQVGVLSMPGLEDVGSQVRDMFSKVFPSRRKRRRMKVRDAFNLLTQEEADRLIDHDRVSDLARERVEQTGIIFIDEIDKIASGSTQKSSDVSREGVQRDLLPIVEGSVVNTKYGMVRTDHILFIAAGAFHFSKPSDLIPELQGRFPLRAELSALGKDDFLRILTEPHNALTRQYTALLQTEGVHIEFTGDALREIAAFAEETNAQTENIGARRLYTILEKILADLSFEAPDRSGDRVTVDSDYVREHLADVRANKDLSRYIL.

ATP-binding positions include Val-18 and 60 to 65; that span reads GVGKTE. 2 stretches are compositionally biased toward low complexity: residues 136 to 147 and 171 to 181; these read LPGGAPQPAPAQ and AQADASQASPP. Residues 136–212 are disordered; the sequence is LPGGAPQPAP…HGGKLDDREV (77 aa). Positions 182-191 are enriched in polar residues; that stretch reads TGTGSAPDSR. The span at 192 to 209 shows a compositional bias: basic and acidic residues; the sequence is SSTREKLRTLWHGGKLDD. The ATP site is built by Asp-296, Glu-361, and Arg-433.

This sequence belongs to the ClpX chaperone family. HslU subfamily. A double ring-shaped homohexamer of HslV is capped on each side by a ring-shaped HslU homohexamer. The assembly of the HslU/HslV complex is dependent on binding of ATP.

The protein localises to the cytoplasm. Functionally, ATPase subunit of a proteasome-like degradation complex; this subunit has chaperone activity. The binding of ATP and its subsequent hydrolysis by HslU are essential for unfolding of protein substrates subsequently hydrolyzed by HslV. HslU recognizes the N-terminal part of its protein substrates and unfolds these before they are guided to HslV for hydrolysis. This is ATP-dependent protease ATPase subunit HslU from Nitratidesulfovibrio vulgaris (strain DSM 19637 / Miyazaki F) (Desulfovibrio vulgaris).